A 357-amino-acid chain; its full sequence is Fructose-bisphosphate aldolase, cytoplasmic isozyme 1 (357 aa).

Residues Arg-52 and Lys-142 each contribute to the substrate site. Glu-183 (proton acceptor) is an active-site residue. Lys-225 acts as the Schiff-base intermediate with dihydroxyacetone-P in catalysis.

It belongs to the class I fructose-bisphosphate aldolase family.

It is found in the cytoplasm. The enzyme catalyses beta-D-fructose 1,6-bisphosphate = D-glyceraldehyde 3-phosphate + dihydroxyacetone phosphate. Its pathway is carbohydrate degradation; glycolysis; D-glyceraldehyde 3-phosphate and glycerone phosphate from D-glucose: step 4/4. The polypeptide is Fructose-bisphosphate aldolase, cytoplasmic isozyme 1 (Pisum sativum (Garden pea)).